The primary structure comprises 299 residues: Bifunctional protein FolD 2 (299 aa).

NADP(+) is bound by residues 168–170 (GRS), Ser193, and Ile234.

This sequence belongs to the tetrahydrofolate dehydrogenase/cyclohydrolase family. Homodimer.

It carries out the reaction (6R)-5,10-methylene-5,6,7,8-tetrahydrofolate + NADP(+) = (6R)-5,10-methenyltetrahydrofolate + NADPH. It catalyses the reaction (6R)-5,10-methenyltetrahydrofolate + H2O = (6R)-10-formyltetrahydrofolate + H(+). Its pathway is one-carbon metabolism; tetrahydrofolate interconversion. In terms of biological role, catalyzes the oxidation of 5,10-methylenetetrahydrofolate to 5,10-methenyltetrahydrofolate and then the hydrolysis of 5,10-methenyltetrahydrofolate to 10-formyltetrahydrofolate. The protein is Bifunctional protein FolD 2 of Rhizobium meliloti (strain 1021) (Ensifer meliloti).